A 1135-amino-acid polypeptide reads, in one-letter code: uncharacterized protein (1135 aa).

The N-terminal stretch at 1 to 28 (MALFPRGILIALVLSFVLNLGLVTKIHA) is a signal peptide. 7 helical membrane-spanning segments follow: residues 332-352 (IVTA…LLAG), 359-379 (EYIN…GINI), 393-413 (MIQW…NWVM), 495-515 (MLVS…AFMV), 522-542 (MISI…FLFA), 555-575 (MISF…MFAV), and 700-720 (IKNI…MYNF).

Belongs to the TrbL/VirB6 family.

The protein localises to the cell membrane. This is an uncharacterized protein from Rickettsia typhi (strain ATCC VR-144 / Wilmington).